A 618-amino-acid chain; its full sequence is Probable peptide transporter ptr2 (618 aa).

The residue at position 22 (Ser-22) is a Phosphoserine. A Phosphotyrosine modification is found at Tyr-23. A phosphoserine mark is found at Ser-25 and Ser-33. The segment at 26 to 50 (KEKKADGSATINTADEQSSTDELQK) is disordered. The segment covering 34–50 (ATINTADEQSSTDELQK) has biased composition (polar residues). Phosphothreonine is present on Thr-35. Ser-44 carries the post-translational modification Phosphoserine. Thr-45 is subject to Phosphothreonine. Phosphoserine is present on residues Ser-51 and Ser-53. The residue at position 54 (Thr-54) is a Phosphothreonine. Transmembrane regions (helical) follow at residues 131–151 (GLSN…ALIA), 161–181 (IVCS…TAIP), 187–207 (GKSM…TGGI), 247–267 (YMIF…TTSL), 273–293 (FVYA…ILAV), 400–420 (FDSI…YPLL), 430–450 (ILRI…AAVL), 475–495 (VWIQ…ASIT), 510–530 (SIIT…SICI), and 541–561 (WMYT…WVCF). Position 594 is a phosphoserine (Ser-594). Thr-618 is subject to Phosphothreonine.

It belongs to the major facilitator superfamily. Proton-dependent oligopeptide transporter (POT/PTR) (TC 2.A.17) family.

Its subcellular location is the membrane. In terms of biological role, uptake of small peptides. This is Probable peptide transporter ptr2 (ptr2) from Schizosaccharomyces pombe (strain 972 / ATCC 24843) (Fission yeast).